Here is a 301-residue protein sequence, read N- to C-terminus: Phosphoribosylaminoimidazole-succinocarboxamide synthase (301 aa).

Belongs to the SAICAR synthetase family.

It catalyses the reaction 5-amino-1-(5-phospho-D-ribosyl)imidazole-4-carboxylate + L-aspartate + ATP = (2S)-2-[5-amino-1-(5-phospho-beta-D-ribosyl)imidazole-4-carboxamido]succinate + ADP + phosphate + 2 H(+). It functions in the pathway purine metabolism; IMP biosynthesis via de novo pathway; 5-amino-1-(5-phospho-D-ribosyl)imidazole-4-carboxamide from 5-amino-1-(5-phospho-D-ribosyl)imidazole-4-carboxylate: step 1/2. This is Phosphoribosylaminoimidazole-succinocarboxamide synthase (ADE1) from Cyberlindnera jadinii (Torula yeast).